A 997-amino-acid polypeptide reads, in one-letter code: Signal peptide, CUB and EGF-like domain-containing protein 2 (997 aa).

The signal sequence occupies residues 1-28; sequence MGVAGCGRPREARALLLLLLLLPPLLAA. One can recognise an EGF-like 1; calcium-binding domain in the interval 43-83; sequence DVDECAQGLDDCHADALCQNTPTSYKCSCKPGYQGEGRQCE. 8 disulfides stabilise this stretch: Cys47/Cys60, Cys54/Cys69, Cys71/Cys82, Cys88/Cys100, Cys96/Cys109, Cys111/Cys124, Cys130/Cys141, and Cys137/Cys150. An EGF-like 2; calcium-binding domain is found at 84 to 125; that stretch reads DMDECDNTLNGGCVHDCLNIPGNYRCTCFDGFMLAHDGHNCL. Positions 126–162 constitute an EGF-like 3; calcium-binding domain; that stretch reads DMDECLENNGGCQHICTNVIGSYECRCKEGFFLSDNQ. 3 EGF-like domains span residues 175–211, 215–250, and 284–319; these read CMNK…QKDC, CNHG…GRSC, and CAVN…GKTC. In terms of domain architecture, EGF-like 7; calcium-binding spans 321 to 361; the sequence is DIDECQTRNGGCNHFCKNTVGSFDCSCKKGFKLLTDEKSCQ. Disulfide bonds link Cys325-Cys336, Cys332-Cys345, Cys347-Cys360, Cys366-Cys376, Cys372-Cys385, Cys387-Cys399, Cys405-Cys416, Cys412-Cys425, and Cys427-Cys440. The region spanning 362–400 is the EGF-like 8; calcium-binding domain; it reads DVDECSLERTCDHSCINHPGTFICACNPGYTLYSFTHCG. An EGF-like 9; calcium-binding domain is found at 401–441; sequence DTNECSVNNGGCQQVCINTVGSYECQCHPGFKLHWNKKDCV. Asn657 carries N-linked (GlcNAc...) asparagine glycosylation. Residues Cys807 and Cys833 are joined by a disulfide bond. The CUB domain maps to 807-919; the sequence is CGGELGDFTG…RGFQVPYVTY (113 aa). The interaction with the cholesterol-anchor of SHH stretch occupies residues 845–854; it reads ILIVVPEIFL. Cys860 and Cys881 are joined by a disulfide.

As to quaternary structure, interacts with SHH via the cholesterol anchor of the dually lipid-modified SHH (ShhNp). Interacts with PTCH1. Forms homooligomers and heterooligomers with SCUBE1 and SCUBE3. Interacts with VEGFR2. Post-translationally, N-glycosylated. Expressed in adult heart, lung and testis.

The protein resides in the secreted. Its subcellular location is the cell surface. Functionally, lipid-binding protein required for SHH long-range signaling by binding to the dually lipid-modified SHH (ShhNp) and by promoting ShhNp mobilization, solubilization and release from the cell membrane. Acts by enhancing the proteolytic processing (shedding) of the lipid-modified N- and C- terminal of ShhNp at the cell surface. Synergizes with DISP1 to cause an increase in SHH secretion. Probable cell surface coreceptor for VEGFR2 involved in VEGFR2-mediated angiogenesis. The protein is Signal peptide, CUB and EGF-like domain-containing protein 2 of Mus musculus (Mouse).